The sequence spans 1481 residues: Chromosome partition protein MukB (1481 aa).

Position 34-41 (34-41 (GGNGAGKS)) interacts with ATP. 5 coiled-coil regions span residues 338–480 (SLVQ…QAYQ), 509–604 (QHLA…APVW), 780–805 (RAAR…ATLS), 835–1116 (EAEI…AKAG), and 1210–1265 (EAIE…LQAV). The tract at residues 666-783 (PSGAEDSRMI…EVPLFGRAAR (118 aa)) is flexible hinge.

The protein belongs to the SMC family. MukB subfamily. In terms of assembly, homodimerization via its hinge domain. Binds to DNA via its C-terminal region. Interacts, and probably forms a ternary complex, with MukE and MukF via its C-terminal region. The complex formation is stimulated by calcium or magnesium. Interacts with tubulin-related protein FtsZ.

It is found in the cytoplasm. Its subcellular location is the nucleoid. Functionally, plays a central role in chromosome condensation, segregation and cell cycle progression. Functions as a homodimer, which is essential for chromosome partition. Involved in negative DNA supercoiling in vivo, and by this means organize and compact chromosomes. May achieve or facilitate chromosome segregation by condensation DNA from both sides of a centrally located replisome during cell division. The chain is Chromosome partition protein MukB from Yersinia enterocolitica serotype O:8 / biotype 1B (strain NCTC 13174 / 8081).